Consider the following 1006-residue polypeptide: Unconventional myosin-Id (1006 aa).

N-acetylalanine is present on Ala2. Positions 9–695 (FGKADFVLMD…TLFTLEELRA (687 aa)) constitute a Myosin motor domain. 102 to 109 (GESGAGKT) contacts ATP. At Ser200 the chain carries Phosphoserine. Tyr536 carries the post-translational modification Phosphotyrosine. The interval 572-594 (MIALVDNLASKEPYYVRCIKPND) is actin-binding. IQ domains lie at 699–719 (VRVVLFLQKVWRGTLARMRYK) and 721–741 (TKAALTIIRYYRRYKVKSYIH). The 194-residue stretch at 812–1005 (GQRADLGLQR…RSGFILSVPG (194 aa)) folds into the TH1 domain.

This sequence belongs to the TRAFAC class myosin-kinesin ATPase superfamily. Myosin family. As to quaternary structure, interacts (via the two IQ motifs) with calmodulin. Binds an additional calmodulin chain via a third, C-terminal region. Interacts with F-actin. As to expression, detected in enterocytes at the intestinal brush border membrane. Detected at the tip of intestinal microvilli (at protein level).

It localises to the cytoplasm. The protein localises to the perikaryon. Its subcellular location is the cell projection. It is found in the dendrite. The protein resides in the early endosome. It localises to the cell cortex. The protein localises to the basolateral cell membrane. Its function is as follows. Unconventional myosin that functions as actin-based motor protein with ATPase activity. Plays a role in endosomal protein trafficking, and especially in the transfer of cargo proteins from early to recycling endosomes. Required for normal planar cell polarity in ciliated tracheal cells, for normal rotational polarity of cilia, and for coordinated, unidirectional ciliary movement in the trachea. Required for normal, polarized cilia organization in brain ependymal epithelial cells. This chain is Unconventional myosin-Id, found in Mus musculus (Mouse).